The chain runs to 1939 residues: Myosin-6 (1939 aa).

One can recognise a Myosin N-terminal SH3-like domain in the interval D32–P81. Positions D85–D780 constitute a Myosin motor domain. K129 is modified (N6,N6,N6-trimethyllysine). G178–T185 serves as a coordination point for ATP. At T379 the chain carries Phosphothreonine. S417 bears the Phosphoserine mark. Actin-binding stretches follow at residues L657 to E679 and K759 to G773. Residues L783 to A812 form the IQ domain. Residues L842 to E1939 adopt a coiled-coil conformation. Phosphoserine is present on residues S1090 and S1139. The residue at position 1261 (Y1261) is a Phosphotyrosine. S1271 carries the post-translational modification Phosphoserine. Residues T1277 and T1284 each carry the phosphothreonine modification. The residue at position 1309 (S1309) is a Phosphoserine. Y1310 is subject to Phosphotyrosine. T1311 is subject to Phosphothreonine. Residue S1512 is modified to Phosphoserine. T1515 and T1681 each carry phosphothreonine. Residues A1908–E1939 form a disordered region. Residues K1925–E1939 show a composition bias toward basic and acidic residues.

It belongs to the TRAFAC class myosin-kinesin ATPase superfamily. Myosin family. Muscle myosin is a hexameric protein that consists of 2 heavy chain subunits (MHC), 2 alkali light chain subunits (MLC) and 2 regulatory light chain subunits (MLC-2).

It localises to the cytoplasm. The protein resides in the myofibril. Functionally, muscle contraction. The chain is Myosin-6 (MYH6) from Mesocricetus auratus (Golden hamster).